Reading from the N-terminus, the 268-residue chain is 3-deoxy-manno-octulosonate cytidylyltransferase (268 aa).

This sequence belongs to the KdsB family.

It is found in the cytoplasm. It catalyses the reaction 3-deoxy-alpha-D-manno-oct-2-ulosonate + CTP = CMP-3-deoxy-beta-D-manno-octulosonate + diphosphate. It participates in nucleotide-sugar biosynthesis; CMP-3-deoxy-D-manno-octulosonate biosynthesis; CMP-3-deoxy-D-manno-octulosonate from 3-deoxy-D-manno-octulosonate and CTP: step 1/1. The protein operates within bacterial outer membrane biogenesis; lipopolysaccharide biosynthesis. Functionally, activates KDO (a required 8-carbon sugar) for incorporation into bacterial lipopolysaccharide in Gram-negative bacteria. This Psychrobacter arcticus (strain DSM 17307 / VKM B-2377 / 273-4) protein is 3-deoxy-manno-octulosonate cytidylyltransferase.